The following is a 179-amino-acid chain: Large ribosomal subunit protein uL5 (179 aa).

This sequence belongs to the universal ribosomal protein uL5 family. Part of the 50S ribosomal subunit; part of the 5S rRNA/L5/L18/L25 subcomplex. Contacts the 5S rRNA and the P site tRNA. Forms a bridge to the 30S subunit in the 70S ribosome.

This is one of the proteins that bind and probably mediate the attachment of the 5S RNA into the large ribosomal subunit, where it forms part of the central protuberance. In the 70S ribosome it contacts protein S13 of the 30S subunit (bridge B1b), connecting the 2 subunits; this bridge is implicated in subunit movement. Contacts the P site tRNA; the 5S rRNA and some of its associated proteins might help stabilize positioning of ribosome-bound tRNAs. The sequence is that of Large ribosomal subunit protein uL5 from Pseudomonas putida (strain ATCC 700007 / DSM 6899 / JCM 31910 / BCRC 17059 / LMG 24140 / F1).